Reading from the N-terminus, the 730-residue chain is Catalase R (730 aa).

H105 is a catalytic residue. Y392 lines the heme pocket. The tract at residues 403 to 433 (PNFEQIPVNRPRKPVHNNNRDGFGQQQIPTN) is disordered.

The protein belongs to the catalase family. Heme serves as cofactor.

It carries out the reaction 2 H2O2 = O2 + 2 H2O. In terms of biological role, occurs in almost all aerobically respiring organisms and serves to protect cells from the toxic effects of hydrogen peroxide. In Aspergillus niger, this protein is Catalase R (catR).